A 91-amino-acid chain; its full sequence is Small ribosomal subunit protein bS16 (91 aa).

It belongs to the bacterial ribosomal protein bS16 family.

This Streptococcus mutans serotype c (strain ATCC 700610 / UA159) protein is Small ribosomal subunit protein bS16.